The sequence spans 269 residues: Shikimate dehydrogenase (NADP(+)) (269 aa).

Shikimate contacts are provided by residues 17 to 19 and threonine 64; that span reads SKS. Lysine 68 functions as the Proton acceptor in the catalytic mechanism. Glutamate 80 is an NADP(+) binding site. Asparagine 89 and aspartate 105 together coordinate shikimate. Residues 130 to 134, 154 to 159, and methionine 213 contribute to the NADP(+) site; these read GAGGA and NRTHAK. Residue tyrosine 215 participates in shikimate binding. NADP(+) is bound at residue glycine 237.

This sequence belongs to the shikimate dehydrogenase family. As to quaternary structure, homodimer.

The catalysed reaction is shikimate + NADP(+) = 3-dehydroshikimate + NADPH + H(+). Its pathway is metabolic intermediate biosynthesis; chorismate biosynthesis; chorismate from D-erythrose 4-phosphate and phosphoenolpyruvate: step 4/7. Involved in the biosynthesis of the chorismate, which leads to the biosynthesis of aromatic amino acids. Catalyzes the reversible NADPH linked reduction of 3-dehydroshikimate (DHSA) to yield shikimate (SA). This is Shikimate dehydrogenase (NADP(+)) from Neisseria pharyngis.